A 276-amino-acid chain; its full sequence is 3-methyl-2-oxobutanoate hydroxymethyltransferase (276 aa).

D45 and D84 together coordinate Mg(2+). 3-methyl-2-oxobutanoate is bound by residues 45–46, D84, and K114; that span reads DS. E116 serves as a coordination point for Mg(2+). The active-site Proton acceptor is E183.

This sequence belongs to the PanB family. As to quaternary structure, homodecamer; pentamer of dimers. Mg(2+) serves as cofactor.

The protein localises to the cytoplasm. It catalyses the reaction 3-methyl-2-oxobutanoate + (6R)-5,10-methylene-5,6,7,8-tetrahydrofolate + H2O = 2-dehydropantoate + (6S)-5,6,7,8-tetrahydrofolate. Its pathway is cofactor biosynthesis; (R)-pantothenate biosynthesis; (R)-pantoate from 3-methyl-2-oxobutanoate: step 1/2. In terms of biological role, catalyzes the reversible reaction in which hydroxymethyl group from 5,10-methylenetetrahydrofolate is transferred onto alpha-ketoisovalerate to form ketopantoate. The sequence is that of 3-methyl-2-oxobutanoate hydroxymethyltransferase from Syntrophomonas wolfei subsp. wolfei (strain DSM 2245B / Goettingen).